Here is a 608-residue protein sequence, read N- to C-terminus: Phosphogluconate dehydratase (608 aa).

Positions 154 and 221 each coordinate [4Fe-4S] cluster.

It belongs to the IlvD/Edd family. [4Fe-4S] cluster serves as cofactor.

It carries out the reaction 6-phospho-D-gluconate = 2-dehydro-3-deoxy-6-phospho-D-gluconate + H2O. It participates in carbohydrate metabolism; Entner-Doudoroff pathway. Catalyzes the dehydration of 6-phospho-D-gluconate to 2-dehydro-3-deoxy-6-phospho-D-gluconate. The polypeptide is Phosphogluconate dehydratase (Pseudomonas aeruginosa (strain ATCC 15692 / DSM 22644 / CIP 104116 / JCM 14847 / LMG 12228 / 1C / PRS 101 / PAO1)).